The sequence spans 510 residues: RanBP-type and C3HC4-type zinc finger-containing protein 1 (510 aa).

The residue at position 1 (methionine 1) is an N-acetylmethionine. The tract at residues 1 to 220 is interaction with IRF3; it reads MDEKTKKAEE…PGCEMCCRAR (220 aa). Positions 1–270 are interaction with TAB2; that stretch reads MDEKTKKAEE…NYLQHVQLDQ (270 aa). A Phosphoserine modification is found at serine 50. Positions 55 to 119 constitute a Ubiquitin-like domain; the sequence is IRLWVSVEDA…DQETLHSHGV (65 aa). An interaction with RNF31 region spans residues 69 to 131; that stretch reads VTIWLTVRPD…NGDSAYLYLL (63 aa). The disordered stretch occupies residues 160-192; it reads LTLQPRGPLEPGPPKPGVPQEPGRGQPDAVPEP. Over residues 167–178 the composition is skewed to pro residues; sequence PLEPGPPKPGVP. The RanBP2-type zinc-finger motif lies at 193-222; sequence PPVGWQCPGCTFINKPTRPGCEMCCRARPE. Residues 233 to 261 adopt a coiled-coil conformation; it reads DEEERARLAGEEEALRQYQQRKQQQQEGN. Residues 278-506 form a TRIAD supradomain region; the sequence is EPAECPVCYS…VNGIPCHPSC (229 aa). Positions 282, 285, 300, 302, 305, 308, and 323 each coordinate Zn(2+). The RING-type 1 zinc finger occupies 282-332; sequence CPVCYSVLAPGEAVVLRECLHTFCRECLQGTIRNSQEAEVSCPFIDNTYSC. Tyrosine 330 is modified (phosphotyrosine). The Zn(2+) site is built by cysteine 332, cysteine 371, cysteine 376, cysteine 391, cysteine 394, cysteine 399, cysteine 402, histidine 406, cysteine 411, cysteine 447, and cysteine 450. The IBR-type zinc finger occupies 351–411; sequence QRFLDLGISI…CKAIHEQMNC (61 aa). The RING-type 2; atypical zinc finger occupies 447 to 476; the sequence is CPQCQIVVQKKDGCDWIRCTVCHTEICWVT. Cysteine 460 is a catalytic residue. Zn(2+)-binding residues include cysteine 465 and cysteine 468.

This sequence belongs to the RBR family. As to quaternary structure, component of the LUBAC complex (linear ubiquitin chain assembly complex) which consists of SHARPIN, RBCK1 and RNF31. LUBAC has a MW of approximately 600 kDa suggesting a heteromultimeric assembly of its subunits. Interacts with beta-I-type (PRKCB1) and zeta-type protein kinase C (PRKCZ). Interacts with UBE2L3. Interacts with PRKCH. Associates with the TNF-R1 signaling complex (TNF-RSC) in a stimulation-dependent manner. Interacts with EYA1, TAB2, TAB3, MAP3K7 TRAF6 and RIPK1. Interacts with IRF3. In terms of assembly, interacts with IREB2 only in iron-rich conditions. (Microbial infection) Interacts with hepatitis B virus/HBV protein HBx; this interaction is required to activate transcription of the viral genome. Post-translationally, auto-ubiquitinated. Auto-ubiquitination leads to degradation by the proteasome. In terms of processing, phosphorylated. In vitro, phosphorylation inhibits auto-ubiquitination activity. (Microbial infection) Ubiquitinated by S.flexneri E3 ubiquitin-protein ligases IpaH1.4 and IpaH2.5, leading to its degradation by the proteasome, thereby preventing formation of the bacterial ubiquitin coat and activation of innate immunity.

It carries out the reaction [E2 ubiquitin-conjugating enzyme]-S-ubiquitinyl-L-cysteine + [acceptor protein]-L-lysine = [E2 ubiquitin-conjugating enzyme]-L-cysteine + [acceptor protein]-N(6)-ubiquitinyl-L-lysine.. It functions in the pathway protein modification; protein ubiquitination. In terms of biological role, E3 ubiquitin-protein ligase, which accepts ubiquitin from specific E2 ubiquitin-conjugating enzymes, such as UBE2L3/UBCM4, and then transfers it to substrates. Functions as an E3 ligase for oxidized IREB2 and both heme and oxygen are necessary for IREB2 ubiquitination. Promotes ubiquitination of TAB2 and IRF3 and their degradation by the proteasome. Component of the LUBAC complex which conjugates linear ('Met-1'-linked) polyubiquitin chains to substrates and plays a key role in NF-kappa-B activation and regulation of inflammation. LUBAC conjugates linear polyubiquitin to IKBKG and RIPK1 and is involved in activation of the canonical NF-kappa-B and the JNK signaling pathways. Linear ubiquitination mediated by the LUBAC complex interferes with TNF-induced cell death and thereby prevents inflammation. LUBAC is recruited to the TNF-R1 signaling complex (TNF-RSC) following polyubiquitination of TNF-RSC components by BIRC2 and/or BIRC3 and to conjugate linear polyubiquitin to IKBKG and possibly other components contributing to the stability of the complex. The LUBAC complex is also involved in innate immunity by conjugating linear polyubiquitin chains at the surface of bacteria invading the cytosol to form the ubiquitin coat surrounding bacteria. LUBAC is not able to initiate formation of the bacterial ubiquitin coat, and can only promote formation of linear polyubiquitins on pre-existing ubiquitin. The bacterial ubiquitin coat acts as an 'eat-me' signal for xenophagy and promotes NF-kappa-B activation. Together with OTULIN, the LUBAC complex regulates the canonical Wnt signaling during angiogenesis. Binds polyubiquitin of different linkage types. The protein is RanBP-type and C3HC4-type zinc finger-containing protein 1 (RBCK1) of Homo sapiens (Human).